The sequence spans 165 residues: Protein SprT (165 aa).

In terms of domain architecture, SprT-like spans 20-163 (EKLAQANLKL…RCVHCGEQLV (144 aa)). His78 lines the Zn(2+) pocket. Residue Glu79 is part of the active site. Zn(2+) is bound at residue His82.

The protein belongs to the SprT family. Zn(2+) is required as a cofactor.

Its subcellular location is the cytoplasm. In Escherichia coli (strain K12 / MC4100 / BW2952), this protein is Protein SprT.